A 228-amino-acid chain; its full sequence is Small ribosomal subunit protein uS3 (228 aa).

One can recognise a KH type-2 domain in the interval 39-107 (VREYLQDKLK…PVHINIEEIR (69 aa)).

This sequence belongs to the universal ribosomal protein uS3 family. As to quaternary structure, part of the 30S ribosomal subunit. Forms a tight complex with proteins S10 and S14.

Functionally, binds the lower part of the 30S subunit head. Binds mRNA in the 70S ribosome, positioning it for translation. The sequence is that of Small ribosomal subunit protein uS3 from Pseudomonas fluorescens (strain ATCC BAA-477 / NRRL B-23932 / Pf-5).